Consider the following 762-residue polypeptide: ABC-type oligopeptide transporter ABCB9 (762 aa).

8 helical membrane passes run 7–27, 47–67, 84–104, 116–136, 181–201, 221–241, 315–335, and 412–432; these read VVVT…IYAF, VLDL…ATIG, LVIT…LLLF, FWAL…LWGL, VAFL…ETFL, FTTA…AAGI, VFMF…FPII, and SGLT…HLVI. The region spanning 184-467 is the ABC transmembrane type-1 domain; the sequence is LVAASFFLIV…VGSVYSGLMQ (284 aa). The ABC transporter domain occupies 500 to 736; it reads VDFENVTFTY…GGLYAKLVQR (237 aa). 535-542 serves as a coordination point for ATP; the sequence is GPSGSGKS.

The protein belongs to the ABC transporter superfamily. ABCB family. MHC peptide exporter (TC 3.A.1.209) subfamily. In terms of assembly, homodimer. Interacts (via TMD0 region) with LAMP1; this interaction strongly stabilizes ABCB9 and protects ABCB9 against lysosomal degradation. Interacts (via TMD0 region) with LAMP2 (isoform LAMP-2B). Interacts (via TMD0) with YIF1B; this interaction allows (but is not essential) the ER-to-Golgi trafficking and strongly depends on a salt bridge within TMD0. In terms of tissue distribution, highly expressed in testis, particularly in the Sertoli cells of the seminiferous tubules, and at moderate levels in brain and spinal cord.

Its subcellular location is the lysosome membrane. It catalyses the reaction a [oligopeptide](in) + ATP + H2O = a [oligopeptide](out) + ADP + phosphate + H(+). In terms of biological role, ATP-dependent low-affinity peptide transporter which translocates a broad spectrum of peptides from the cytosol to the lysosomal lumen for degradation. Displays a broad peptide length specificity from 6-mer up to at least 59-mer peptides with an optimum of 23-mers. Binds and transports smaller and larger peptides with the same affinity. Favors positively charged, aromatic or hydrophobic residues in the N- and C-terminal positions whereas negatively charged residues as well as asparagine and methionine are not favored. This Mus musculus (Mouse) protein is ABC-type oligopeptide transporter ABCB9.